Here is a 527-residue protein sequence, read N- to C-terminus: Nucleobase-ascorbate transporter LPE1 (527 aa).

12 consecutive transmembrane segments (helical) span residues L43–G63, A68–F88, L92–S112, L132–W152, A163–V183, V189–A209, A219–A239, F284–V304, V361–A383, L387–L409, L427–G447, and V458–L478.

This sequence belongs to the nucleobase:cation symporter-2 (NCS2) (TC 2.A.40) family. Highly expressed in roots.

The protein localises to the membrane. Its activity is regulated as follows. Inhibited by excess of xanthin, uric acid and ascorbic acid, and by 100 um N,N-dicyclohexylcarbodiimide and 30 um carbonyl cyanide m-chlorophenyl-hydrazone. In terms of biological role, high affinity uric acid-xanthine transporter in A.nidulans. Binds, but cannot transport ascorbic acid. This is Nucleobase-ascorbate transporter LPE1 (LPE1) from Zea mays (Maize).